The primary structure comprises 384 residues: MKFMAKIELSRHIPLVTLIVLVLCITPPIFATKNCDFPAIFSFGASNVDTGGLAAAFRAPPSPYGETYFHRSTGRFSDGRIILDFIARSFRLPYLSPYLNSLGSNFTHGANFASGGSTINIPKSILPNGKLSPFSLQIQYIQFKEFISKTKLIRDQGGVFATLIPKEDYFSKALYIFDIGQNDLTIGFFGNKTIQQVNATVPDIVNNYIENIKNIYNLGARSFWIHGTGPKGCAPVILANFPSAIKDSYGCAKQYNEVSQYFNFKLKEALAELRSNLSSAAITYVDIYTPKYSLFTNPEKYGFELPFVACCGYGGEYNIGVGCGASININGTKIVAGSCKNPSTRIIWDGVHYTEAANEIVFSQILTGVFNDPPISLDRACYRK.

Residues 1 to 31 (MKFMAKIELSRHIPLVTLIVLVLCITPPIFA) form the signal peptide. The Nucleophile role is filled by S46. Residues N105, N191, N198, N276, and N330 are each glycosylated (N-linked (GlcNAc...) asparagine). Catalysis depends on residues D349 and H352.

The protein belongs to the 'GDSL' lipolytic enzyme family. Expressed in root nodules (at protein level).

Its subcellular location is the symbiosome. Functionally, has lipase and esterase activities. Probably involved in root nodule physiology. In Medicago truncatula (Barrel medic), this protein is GDSL esterase/lipase ENOD8.